We begin with the raw amino-acid sequence, 452 residues long: Gastrin/cholecystokinin type B receptor (452 aa).

Over 1–55 the chain is Extracellular; it reads MELVKLNRSVQGSGPVASLCRPGGPLLNNSGTGNLSCEPPRIRGAGTRELELAIR. N-linked (GlcNAc...) asparagine glycans are attached at residues Asn-7, Asn-28, and Asn-34. A helical membrane pass occupies residues 56-77; sequence VTLYAVIFLMSVGGNILIIVVL. Residues 78–85 lie on the Cytoplasmic side of the membrane; sequence GLSRRLRT. Residues 86–107 traverse the membrane as a helical segment; sequence VTNAFLLSLAVSDLLLAVACMP. Topologically, residues 108-129 are extracellular; sequence FTLLPNLMGTFIFGTVICKAVS. A disulfide bond links Cys-125 and Cys-203. The helical transmembrane segment at 130-148 threads the bilayer; that stretch reads YLMGVSVSVSTLSLVAIAL. The Cytoplasmic portion of the chain corresponds to 149–168; that stretch reads ERYSAICRPLQARVWQTRSH. A helical transmembrane segment spans residues 169–187; that stretch reads AARVILATWLLSGLLMVPY. The Extracellular segment spans residues 188–217; sequence PVYTAVQPVGPRVLQCVHRWPSARVRQTWS. The chain crosses the membrane as a helical span at residues 218–240; the sequence is VLLLLLLFFVPGVVMAVAYGLIS. At 241–338 the chain is on the cytoplasmic side; sequence RELYLGLRFD…KLLAKKRVVR (98 aa). Residues 255–285 form a disordered region; that stretch reads SESQSRVRGQGGLPGGAAPGPVHQNGRCRPE. A compositionally biased stretch (gly residues) spans 263–272; that stretch reads GQGGLPGGAA. Residues 339–360 form a helical membrane-spanning segment; it reads MLLVIVVLFFMCWLPVYSANTW. The Extracellular segment spans residues 361–378; sequence RAFDGPGAHRALSGAPIS. Residues 379–399 form a helical membrane-spanning segment; it reads FIHLLSYASACVNPLVYCFMH. Over 400 to 452 the chain is Cytoplasmic; that stretch reads RRFRQACLDTCARCCPRPPRARPRPLPDEDPPTPSIASLSRLSYTTISTLGPG. Cys-413 carries the S-palmitoyl cysteine lipid modification.

Belongs to the G-protein coupled receptor 1 family.

It is found in the cell membrane. In terms of biological role, receptor for gastrin and cholecystokinin. The CCK-B receptors occur throughout the central nervous system where they modulate anxiety, analgesia, arousal, and neuroleptic activity. This receptor mediates its action by association with G proteins that activate a phosphatidylinositol-calcium second messenger system. This Oryctolagus cuniculus (Rabbit) protein is Gastrin/cholecystokinin type B receptor (CCKBR).